Here is a 662-residue protein sequence, read N- to C-terminus: Carboxysome assembly protein CsoS2 (662 aa).

An N-terminal domain region spans residues 1-227; sequence MSTSNAQSGR…KRRNAKEAPQ (227 aa). Disordered regions lie at residues 1–258, 277–322, and 342–419; these read MSTS…SESG, NCDV…TCSA, and PAKS…RGSC. An N-repeat 1 repeat occupies 8–27; the sequence is SGRAAAIARRNAQVKGKGYT. Composition is skewed to low complexity over residues 28-57 and 64-76; these read ASAA…SQPS and SVAP…ASAA. The stretch at 58-72 is one N-repeat 2 repeat; sequence RSRRKVSVAPTATPA. Residues 120 to 135 show a composition bias toward basic and acidic residues; that stretch reads RQAKAEKPTKRSERRT. Residues 141–150 are compositionally biased toward polar residues; the sequence is VASQQPSGRL. An N-repeat 3 repeat occupies 147-168; the sequence is SGRLQSKAYRKAQAKGKAGQEA. Composition is skewed to low complexity over residues 161 to 170, 237 to 247, and 289 to 300; these read KGKAGQEAFK, GQSVSGTQVGQ, and VTQTQTTRGQVV. M-repeat repeat units lie at residues 228-278, 288-338, 388-436, 446-491, and 496-550; these read KVGE…SKNC, KVTQ…KMYC, KVMP…AKAC, KVTA…TEQF, and VDEQ…AMVC. The tract at residues 228–559 is middle region; it reads KVGESQTLHG…CDSTNAAAPG (332 aa). Polar residues predominate over residues 391–404; sequence PSQTAKGNTTTGSQ. The C-terminal domain stretch occupies residues 560–631; that stretch reads ESDFPAMIGQ…SPMGASQYRP (72 aa). One copy of the C-repeat 1 repeat lies at 564 to 572; that stretch reads PAMIGQAQP. Disordered stretches follow at residues 588-607 and 619-662; these read KITG…DGPW and AGQS…GARA. Positions 632-662 are C-terminal peptide; it reads VNNEVPMSPITGSSGNTDTGAKVTLSGGARA. Residues 641 to 650 are compositionally biased toward polar residues; that stretch reads ITGSSGNTDT.

Belongs to the CsoS2 family. As to quaternary structure, interacts via its N-terminal repeats with RuBisCO. Interacts with the major shell protein CsoS1. In terms of processing, unlike H.neapolitanus and predictions for P.marinus strain MIT 9313, this protein is not thought to have ribosomal frameshifting.

It localises to the carboxysome. Its function is as follows. Required for alpha-carboxysome (Cb) assembly, mediates interaction between RuBisCO and the Cb shell. The protein is probably intrinsically disordered. The C-terminal repeats act as the encapsulation signal to target proteins to the Cb; they are necessary and sufficient to target both CsoS2 and foreign proteins to the Cb. The N-terminal repeats of this protein bind simultaneously to both subunits of RuBisCO. Probably also interacts with the major shell proteins (CsoS1); that interaction would increase the local concentration of CsoS2 so that it can condense RuBisCO and full carboxysomes can be formed. The protein is Carboxysome assembly protein CsoS2 of Hydrogenovibrio crunogenus (strain DSM 25203 / XCL-2) (Thiomicrospira crunogena).